The chain runs to 362 residues: MAFQFNFSIEEDLENKLTSLDDGTCVLKSQKGKEDKNQSTELPGLPQDRLWKCSSLGSAASSEDTDSPPSTADRSGVPEACEKQPSLKPAKEHVIPKDCDQVLENKVLEMLPGSQHVSTAVVKTISLKEKFPGENIVSQSFSSHSDLIPGVYEGGLKIWECTFDLMTYFTKAKVKFAGQKVLDLGCGSGLLGITASKGGAREVHFQDYNGLVIDEVTLPNVVANVPLQGDSNGINEPAGKRQRKSEVAQETCKCRLFSGEWAEFCKLVLSEKLFVKYDLILTSETIYNPDYYSTLHETLLRLLSRNGRVLLASKAHYFGVGGGVHLFQKFVEEKGVFETRTLEVIDEGLKRFLMEMTFKCPS.

The interval 28 to 89 (KSQKGKEDKN…ACEKQPSLKP (62 aa)) is disordered. The span at 55 to 73 (SLGSAASSEDTDSPPSTAD) shows a compositional bias: polar residues. Phosphoserine is present on residues Ser-62 and Ser-67. His-144 is modified (tele-methylhistidine). Residues 158-162 (IWECT), Gly-185, and 206-208 (QDY) contribute to the S-adenosyl-L-methionine site. The Nuclear localization signal signature appears at 237 to 243 (PAGKRQR). S-adenosyl-L-methionine contacts are provided by residues 259 to 261 (GEW) and Ser-283.

Belongs to the methyltransferase superfamily. METTL18 family. In terms of assembly, interacts with GRWD1 and members of the heat shock protein 90 and 70 families; these proteins may possibly be methylation substrates for the enzyme. In terms of processing, monomethylated at His-144 through automethylation. Automethylation at His-144 positively regulates the methyltransferase activity toward RPL3. Probably methylated on other residues.

The protein localises to the cytoplasm. It is found in the cytosol. Its subcellular location is the nucleus. It localises to the nucleolus. It carries out the reaction L-histidyl-[protein] + S-adenosyl-L-methionine = N(tele)-methyl-L-histidyl-[protein] + S-adenosyl-L-homocysteine + H(+). Protein-L-histidine N-tele-methyltransferase that specifically monomethylates RPL3, thereby regulating translation elongation. Histidine methylation of RPL3 regulates translation elongation by slowing ribosome traversal on tyrosine codons: slower elongation provides enough time for proper folding of synthesized proteins and prevents cellular aggregation of tyrosine-rich proteins. The polypeptide is Histidine protein methyltransferase 1 homolog (Rattus norvegicus (Rat)).